Reading from the N-terminus, the 982-residue chain is Mitochondrial DNA mismatch repair protein mutS homolog (982 aa).

Residue 698-705 (SVNGAGKS) coordinates ATP. Residues 905-951 (CEICGAPADAVHHIKPKSEHKKLCNRKLNRRSNLVPVCSSCHLDIHR) form the HNH domain.

The protein belongs to the DNA mismatch repair MutS family.

It localises to the mitochondrion. In terms of biological role, may be involved in DNA-mismatch repair. This Sarcophyton glaucum (Toadstool umbrella leather coral) protein is Mitochondrial DNA mismatch repair protein mutS homolog.